The chain runs to 115 residues: uncharacterized protein (115 aa).

This is an uncharacterized protein from Acidianus filamentous virus 1 (isolate United States/Yellowstone) (AFV-1).